Consider the following 38-residue polypeptide: Large ribosomal subunit protein bL36 (38 aa).

The protein belongs to the bacterial ribosomal protein bL36 family.

This is Large ribosomal subunit protein bL36 from Flavobacterium psychrophilum (strain ATCC 49511 / DSM 21280 / CIP 103535 / JIP02/86).